Consider the following 297-residue polypeptide: Phosphatidylserine decarboxylase proenzyme (297 aa).

Residues Asp-90, His-147, and Ser-252 each act as charge relay system; for autoendoproteolytic cleavage activity in the active site. Residue Ser-252 is the Schiff-base intermediate with substrate; via pyruvic acid; for decarboxylase activity of the active site. Position 252 is a pyruvic acid (Ser); by autocatalysis (Ser-252).

This sequence belongs to the phosphatidylserine decarboxylase family. PSD-B subfamily. Prokaryotic type I sub-subfamily. Heterodimer of a large membrane-associated beta subunit and a small pyruvoyl-containing alpha subunit. The cofactor is pyruvate. Is synthesized initially as an inactive proenzyme. Formation of the active enzyme involves a self-maturation process in which the active site pyruvoyl group is generated from an internal serine residue via an autocatalytic post-translational modification. Two non-identical subunits are generated from the proenzyme in this reaction, and the pyruvate is formed at the N-terminus of the alpha chain, which is derived from the carboxyl end of the proenzyme. The autoendoproteolytic cleavage occurs by a canonical serine protease mechanism, in which the side chain hydroxyl group of the serine supplies its oxygen atom to form the C-terminus of the beta chain, while the remainder of the serine residue undergoes an oxidative deamination to produce ammonia and the pyruvoyl prosthetic group on the alpha chain. During this reaction, the Ser that is part of the protease active site of the proenzyme becomes the pyruvoyl prosthetic group, which constitutes an essential element of the active site of the mature decarboxylase.

It localises to the cell membrane. It carries out the reaction a 1,2-diacyl-sn-glycero-3-phospho-L-serine + H(+) = a 1,2-diacyl-sn-glycero-3-phosphoethanolamine + CO2. The protein operates within phospholipid metabolism; phosphatidylethanolamine biosynthesis; phosphatidylethanolamine from CDP-diacylglycerol: step 2/2. In terms of biological role, catalyzes the formation of phosphatidylethanolamine (PtdEtn) from phosphatidylserine (PtdSer). The chain is Phosphatidylserine decarboxylase proenzyme from Stutzerimonas stutzeri (strain A1501) (Pseudomonas stutzeri).